A 164-amino-acid polypeptide reads, in one-letter code: Protein SprT (164 aa).

The 143-residue stretch at 14 to 156 (QLAESFFKRP…LCRRCRNTLV (143 aa)) folds into the SprT-like domain. His-69 is a Zn(2+) binding site. Glu-70 is a catalytic residue. Position 73 (His-73) interacts with Zn(2+).

Belongs to the SprT family. Requires Zn(2+) as cofactor.

The protein localises to the cytoplasm. The sequence is that of Protein SprT from Pseudomonas fluorescens (strain Pf0-1).